A 503-amino-acid chain; its full sequence is Probable cytosol aminopeptidase (503 aa).

Residues lysine 268 and aspartate 273 each contribute to the Mn(2+) site. Residue lysine 280 is part of the active site. The Mn(2+) site is built by aspartate 291, aspartate 350, and glutamate 352. Arginine 354 is a catalytic residue.

It belongs to the peptidase M17 family. Requires Mn(2+) as cofactor.

It is found in the cytoplasm. It catalyses the reaction Release of an N-terminal amino acid, Xaa-|-Yaa-, in which Xaa is preferably Leu, but may be other amino acids including Pro although not Arg or Lys, and Yaa may be Pro. Amino acid amides and methyl esters are also readily hydrolyzed, but rates on arylamides are exceedingly low.. It carries out the reaction Release of an N-terminal amino acid, preferentially leucine, but not glutamic or aspartic acids.. Its function is as follows. Presumably involved in the processing and regular turnover of intracellular proteins. Catalyzes the removal of unsubstituted N-terminal amino acids from various peptides. The chain is Probable cytosol aminopeptidase from Herminiimonas arsenicoxydans.